A 213-amino-acid chain; its full sequence is Na(+)-translocating NADH-quinone reductase subunit D (213 aa).

The next 6 membrane-spanning stretches (helical) occupy residues leucine 22–leucine 42, threonine 43–arginine 63, isoleucine 77–isoleucine 97, leucine 101–methionine 121, phenylalanine 131–isoleucine 151, and leucine 183–valine 203.

It belongs to the NqrDE/RnfAE family. Composed of six subunits; NqrA, NqrB, NqrC, NqrD, NqrE and NqrF.

Its subcellular location is the cell inner membrane. It catalyses the reaction a ubiquinone + n Na(+)(in) + NADH + H(+) = a ubiquinol + n Na(+)(out) + NAD(+). In terms of biological role, NQR complex catalyzes the reduction of ubiquinone-1 to ubiquinol by two successive reactions, coupled with the transport of Na(+) ions from the cytoplasm to the periplasm. NqrA to NqrE are probably involved in the second step, the conversion of ubisemiquinone to ubiquinol. The chain is Na(+)-translocating NADH-quinone reductase subunit D from Chlamydia trachomatis serovar L2 (strain ATCC VR-902B / DSM 19102 / 434/Bu).